A 3421-amino-acid polypeptide reads, in one-letter code: Large tegument protein deneddylase (3421 aa).

Positions M1–Y248 are deubiquitination activity. Residues V19–I238 enclose the Peptidase C76 domain. Residues C39, D172, and H174 contribute to the active site. The segment at Q311–Q351 is disordered. Polar residues predominate over residues S332 to T344. The segment at L482–S508 is interaction with inner tegument protein. Disordered regions lie at residues E2407–I2442 and S2479–I3195. The span at S2415–S2432 shows a compositional bias: low complexity. 5 stretches are compositionally biased toward pro residues: residues T2506–P2516, P2541–P2556, G2565–P2577, G2586–P2598, and G2607–P2619. Polar residues-rich tracts occupy residues Q2620 to T2637 and S2778 to K2787. The segment covering P2797–A2857 has biased composition (low complexity). Basic and acidic residues predominate over residues K2869–A2895. Polar residues predominate over residues L2953–R2969. Basic and acidic residues-rich tracts occupy residues R3023 to F3040 and C3088 to G3097. A compositionally biased stretch (polar residues) spans I3120–M3146. Pro residues predominate over residues P3171–P3188.

This sequence belongs to the herpesviridae large tegument protein family. Interacts with host CUL1 and CUL4A; these interactions inhibit the E3 ligase activity of cullins. Interacts with inner tegument protein. Interacts with capsid vertex specific component CVC2. Interacts with the major capsid protein/MCP.

It is found in the virion tegument. Its subcellular location is the host cytoplasm. The protein localises to the host nucleus. The catalysed reaction is Thiol-dependent hydrolysis of ester, thioester, amide, peptide and isopeptide bonds formed by the C-terminal Gly of ubiquitin (a 76-residue protein attached to proteins as an intracellular targeting signal).. Large tegument protein that plays multiple roles in the viral cycle. During viral entry, remains associated with the capsid while most of the tegument is detached and participates in the capsid transport toward the host nucleus. Plays a role in the routing of the capsid at the nuclear pore complex and subsequent uncoating. Within the host nucleus, acts as a deneddylase and promotes the degradation of nuclear CRLs (cullin-RING ubiquitin ligases) and thereby stabilizes nuclear CRL substrates, while cytoplasmic CRLs remain unaffected. These modifications prevent host cell cycle S-phase progression and create a favorable environment allowing efficient viral genome replication. Participates later in the secondary envelopment of capsids. Indeed, plays a linker role for the association of the outer viral tegument to the capsids together with the inner tegument protein. This chain is Large tegument protein deneddylase, found in Equus caballus (Horse).